Here is a 285-residue protein sequence, read N- to C-terminus: Protease HtpX homolog (285 aa).

2 consecutive transmembrane segments (helical) span residues 7-27 (TAML…MIGG) and 30-50 (GMTI…WFSD). His131 provides a ligand contact to Zn(2+). The active site involves Glu132. Residue His135 participates in Zn(2+) binding. 2 helical membrane-spanning segments follow: residues 146–166 (ITAT…FFGG) and 177–197 (IAGI…QMAI). Zn(2+) is bound at residue Glu202.

It belongs to the peptidase M48B family. The cofactor is Zn(2+).

It localises to the cell inner membrane. The polypeptide is Protease HtpX homolog (Burkholderia ambifaria (strain MC40-6)).